The following is a 111-amino-acid chain: MAYAIIETGGKQLRVEPGRFYDVERLPIEPEGTIDLEQVLLVQTDSQVHVGQPYVSGAVVSGTVMEHRRGPKVIVYKMRPKKKTRRKKGHRQELTRIMINEIRLNGESLGG.

This sequence belongs to the bacterial ribosomal protein bL21 family. In terms of assembly, part of the 50S ribosomal subunit. Contacts protein L20.

In terms of biological role, this protein binds to 23S rRNA in the presence of protein L20. This Thermosynechococcus vestitus (strain NIES-2133 / IAM M-273 / BP-1) protein is Large ribosomal subunit protein bL21.